Here is a 163-residue protein sequence, read N- to C-terminus: Protein YtsP (163 aa).

Belongs to the free Met sulfoxide reductase family.

The protein is Protein YtsP (ytsP) of Bacillus subtilis (strain 168).